The primary structure comprises 162 residues: Shikimate kinase (162 aa).

Glycine 11 to serine 16 is a binding site for ATP. Residue serine 15 coordinates Mg(2+). Residues aspartate 33, arginine 57, and glycine 80 each coordinate substrate. Arginine 116 contributes to the ATP binding site. Arginine 132 serves as a coordination point for substrate.

The protein belongs to the shikimate kinase family. In terms of assembly, monomer. Mg(2+) serves as cofactor.

Its subcellular location is the cytoplasm. The enzyme catalyses shikimate + ATP = 3-phosphoshikimate + ADP + H(+). Its pathway is metabolic intermediate biosynthesis; chorismate biosynthesis; chorismate from D-erythrose 4-phosphate and phosphoenolpyruvate: step 5/7. Functionally, catalyzes the specific phosphorylation of the 3-hydroxyl group of shikimic acid using ATP as a cosubstrate. The chain is Shikimate kinase from Helicobacter pylori (strain Shi470).